The chain runs to 344 residues: Holliday junction branch migration complex subunit RuvB (344 aa).

The span at 1–25 shows a compositional bias: basic and acidic residues; it reads MTDSDPTLRPDRLPEDVQATDDRAL. The tract at residues 1–33 is disordered; the sequence is MTDSDPTLRPDRLPEDVQATDDRALRPQSLDDF. Residues 1 to 186 form a large ATPase domain (RuvB-L) region; that stretch reads MTDSDPTLRP…FGIPTRLNFY (186 aa). ATP is bound by residues Leu25, Arg26, Gly67, Lys70, Thr71, Thr72, 133 to 135, Arg176, Tyr186, and Arg223; that span reads EDF. Mg(2+) is bound at residue Thr71. A small ATPAse domain (RuvB-S) region spans residues 187 to 257; that stretch reads TIAELDQIVA…IADSALTRLG (71 aa). Residues 260–344 form a head domain (RuvB-H) region; that stretch reads DLGLDGADRR…PKRPDQGELI (85 aa). DNA-binding residues include Arg296, Arg315, and Arg320.

The protein belongs to the RuvB family. Homohexamer. Forms an RuvA(8)-RuvB(12)-Holliday junction (HJ) complex. HJ DNA is sandwiched between 2 RuvA tetramers; dsDNA enters through RuvA and exits via RuvB. An RuvB hexamer assembles on each DNA strand where it exits the tetramer. Each RuvB hexamer is contacted by two RuvA subunits (via domain III) on 2 adjacent RuvB subunits; this complex drives branch migration. In the full resolvosome a probable DNA-RuvA(4)-RuvB(12)-RuvC(2) complex forms which resolves the HJ.

The protein localises to the cytoplasm. The catalysed reaction is ATP + H2O = ADP + phosphate + H(+). Its function is as follows. The RuvA-RuvB-RuvC complex processes Holliday junction (HJ) DNA during genetic recombination and DNA repair, while the RuvA-RuvB complex plays an important role in the rescue of blocked DNA replication forks via replication fork reversal (RFR). RuvA specifically binds to HJ cruciform DNA, conferring on it an open structure. The RuvB hexamer acts as an ATP-dependent pump, pulling dsDNA into and through the RuvAB complex. RuvB forms 2 homohexamers on either side of HJ DNA bound by 1 or 2 RuvA tetramers; 4 subunits per hexamer contact DNA at a time. Coordinated motions by a converter formed by DNA-disengaged RuvB subunits stimulates ATP hydrolysis and nucleotide exchange. Immobilization of the converter enables RuvB to convert the ATP-contained energy into a lever motion, pulling 2 nucleotides of DNA out of the RuvA tetramer per ATP hydrolyzed, thus driving DNA branch migration. The RuvB motors rotate together with the DNA substrate, which together with the progressing nucleotide cycle form the mechanistic basis for DNA recombination by continuous HJ branch migration. Branch migration allows RuvC to scan DNA until it finds its consensus sequence, where it cleaves and resolves cruciform DNA. This is Holliday junction branch migration complex subunit RuvB from Jannaschia sp. (strain CCS1).